A 425-amino-acid chain; its full sequence is Serine--tRNA ligase (425 aa).

Residue 233–235 (TAE) participates in L-serine binding. Residues 264–266 (RRE) and valine 280 each bind ATP. An L-serine-binding site is contributed by glutamate 287. Residue 351-354 (EVSS) participates in ATP binding. Serine 387 lines the L-serine pocket.

This sequence belongs to the class-II aminoacyl-tRNA synthetase family. Type-1 seryl-tRNA synthetase subfamily. Homodimer. The tRNA molecule binds across the dimer.

The protein localises to the cytoplasm. It catalyses the reaction tRNA(Ser) + L-serine + ATP = L-seryl-tRNA(Ser) + AMP + diphosphate + H(+). It carries out the reaction tRNA(Sec) + L-serine + ATP = L-seryl-tRNA(Sec) + AMP + diphosphate + H(+). It functions in the pathway aminoacyl-tRNA biosynthesis; selenocysteinyl-tRNA(Sec) biosynthesis; L-seryl-tRNA(Sec) from L-serine and tRNA(Sec): step 1/1. In terms of biological role, catalyzes the attachment of serine to tRNA(Ser). Is also able to aminoacylate tRNA(Sec) with serine, to form the misacylated tRNA L-seryl-tRNA(Sec), which will be further converted into selenocysteinyl-tRNA(Sec). The protein is Serine--tRNA ligase of Gemmatimonas aurantiaca (strain DSM 14586 / JCM 11422 / NBRC 100505 / T-27).